Reading from the N-terminus, the 289-residue chain is uncharacterized protein (289 aa).

The HTH tetR-type domain maps to 2–62 (NEKKERIIKT…SACEYYIGMS (61 aa)). A DNA-binding region (H-T-H motif) is located at residues 25 to 44 (TIQEIASECGISKGAFYLHF).

This is an uncharacterized protein from Bacillus subtilis (strain 168).